The sequence spans 1260 residues: UPF0507 protein LELG_01076 (1260 aa).

Residues 336-493 form the VPS9 domain; sequence ADYDPSATKV…LSDNDKGLNT (158 aa).

This sequence belongs to the UPF0507 family.

The polypeptide is UPF0507 protein LELG_01076 (Lodderomyces elongisporus (strain ATCC 11503 / CBS 2605 / JCM 1781 / NBRC 1676 / NRRL YB-4239) (Yeast)).